Consider the following 171-residue polypeptide: bZIP transcription factor 2 (171 aa).

Positions 1–24 are enriched in low complexity; it reads MASSSSTYRSSSSSDGGNNNPSDS. The tract at residues 1–54 is disordered; that stretch reads MASSSSTYRSSSSSDGGNNNPSDSVVTVDERKRKRMLSNRESARRSRMRKQKHV. The bZIP domain occupies 29-92; that stretch reads DERKRKRMLS…MKIQAENSVL (64 aa). Residues 31 to 52 form a basic motif region; that stretch reads RKRKRMLSNRESARRSRMRKQK. A leucine-zipper region spans residues 57-71; the sequence is LTAQINQLSNDNRQI.

In terms of assembly, forms heterodimers with BZIP9, BZIP10, BZIP25 and BZIP63. Component of a ternary complex composed of BZIP2-BZIP63 heterodimer and KIN10.

Its subcellular location is the nucleus. Transcription factor that binds to specific DNA sequences in target gene promoters. BZIP2-BZIP63-KIN10 complex binds to the ETFQO promoter to up-regulate its transcription. The protein is bZIP transcription factor 2 of Arabidopsis thaliana (Mouse-ear cress).